Reading from the N-terminus, the 394-residue chain is MSTVQQITVLGATGSIGLSTLDVIARHPERYAVFALSGFSRLAELETLCVQHRPRYVVVPDAAAAHALQGSLRAAALPTEVLVGEEGLCAVAGHGEVDCVMAAIVGAAGLRPTLAAVQAGKKVLLANKEALVMSGALFMQAVRESGATLLPIDSEHNAIFQCLPGDYGRGLQAVGVRRVLLTASGGPFRETPLAELERVTPEQACAHPNWSMGRKISVDSASMMNKGLELIEACWLFDARPEQIEVVIHRQSVIHSLVDYVDGSVLAQLGNPDMRTPIAHALAWPQRIDSGVSPLDLFAIGRLDFERPDEQRFPCLRLAREAAQVGGSAPAMLNAANEVAVDAFLQRRIRFSDIARMIEFVLNAESARAVEALDAVFEADRRARALAGEWLARH.

Residues Thr13, Gly14, Ser15, Ile16, and Asn127 each contribute to the NADPH site. Lys128 provides a ligand contact to 1-deoxy-D-xylulose 5-phosphate. Glu129 is a binding site for NADPH. Mn(2+) is bound at residue Asp153. Ser154, Glu155, Ser184, and His207 together coordinate 1-deoxy-D-xylulose 5-phosphate. Glu155 lines the Mn(2+) pocket. Gly213 is a binding site for NADPH. Positions 220, 225, 226, and 229 each coordinate 1-deoxy-D-xylulose 5-phosphate. Glu229 is a Mn(2+) binding site.

The protein belongs to the DXR family. The cofactor is Mg(2+). Requires Mn(2+) as cofactor.

It catalyses the reaction 2-C-methyl-D-erythritol 4-phosphate + NADP(+) = 1-deoxy-D-xylulose 5-phosphate + NADPH + H(+). It participates in isoprenoid biosynthesis; isopentenyl diphosphate biosynthesis via DXP pathway; isopentenyl diphosphate from 1-deoxy-D-xylulose 5-phosphate: step 1/6. Catalyzes the NADPH-dependent rearrangement and reduction of 1-deoxy-D-xylulose-5-phosphate (DXP) to 2-C-methyl-D-erythritol 4-phosphate (MEP). In Ectopseudomonas mendocina (strain ymp) (Pseudomonas mendocina), this protein is 1-deoxy-D-xylulose 5-phosphate reductoisomerase.